We begin with the raw amino-acid sequence, 149 residues long: Cytochrome c-556 (149 aa).

The signal sequence occupies residues 1–20 (MLRTVIVAGALVLTASAVMA). Residues Met-32, Cys-137, Cys-140, and His-141 each contribute to the heme c site.

Monomer. In terms of processing, binds 1 heme c group covalently per subunit.

In terms of biological role, low-spin monoheme cytochrome c. The chain is Cytochrome c-556 from Rhodopseudomonas palustris (strain ATCC BAA-98 / CGA009).